The following is a 206-amino-acid chain: Ribosomal RNA large subunit methyltransferase E (206 aa).

Residues Gly-60, Trp-62, Asp-80, Asp-96, and Asp-121 each contribute to the S-adenosyl-L-methionine site. The active-site Proton acceptor is the Lys-161.

This sequence belongs to the class I-like SAM-binding methyltransferase superfamily. RNA methyltransferase RlmE family.

The protein resides in the cytoplasm. The enzyme catalyses uridine(2552) in 23S rRNA + S-adenosyl-L-methionine = 2'-O-methyluridine(2552) in 23S rRNA + S-adenosyl-L-homocysteine + H(+). In terms of biological role, specifically methylates the uridine in position 2552 of 23S rRNA at the 2'-O position of the ribose in the fully assembled 50S ribosomal subunit. In Francisella tularensis subsp. holarctica (strain FTNF002-00 / FTA), this protein is Ribosomal RNA large subunit methyltransferase E.